The following is a 135-amino-acid chain: uncharacterized protein (135 aa).

A run of 2 helical transmembrane segments spans residues 20 to 40 (IFSFVFDIFLFIFDVIWNTKL) and 47 to 67 (IAYFLVFFMVIKLSIYAIHGT).

The protein belongs to the plectrovirus ORF5 family.

The protein localises to the host membrane. This is an uncharacterized protein from Spiroplasma virus SpV1-C74 (SpV1).